Here is a 130-residue protein sequence, read N- to C-terminus: MAETQAPAGYLFSEKHEWVKVEGDTALIGISDFAQSALGDIVFVDLPKSGKTVKQFETFGTIESVKAAEDLYAPVGGEVIESNSALSKNPGDVNSKPFDSWMIKVKGFSTSELEKLLSPEKYKALVAKLE.

The Lipoyl-binding domain occupies 25 to 106 (TALIGISDFA…PFDSWMIKVK (82 aa)). Lys66 bears the N6-lipoyllysine mark.

Belongs to the GcvH family. The glycine cleavage system is composed of four proteins: P, T, L and H. (R)-lipoate is required as a cofactor.

The glycine cleavage system catalyzes the degradation of glycine. The H protein shuttles the methylamine group of glycine from the P protein to the T protein. This is Glycine cleavage system H protein from Leptospira borgpetersenii serovar Hardjo-bovis (strain JB197).